The chain runs to 208 residues: Small ribosomal subunit protein uS4 (208 aa).

Residues 31–51 form a disordered region; sequence SALDKRAYGPGQHGQRRAKTS. Residues 98–160 form the S4 RNA-binding domain; the sequence is RRLDNVVYRM…TKSNSQVVRA (63 aa).

It belongs to the universal ribosomal protein uS4 family. As to quaternary structure, part of the 30S ribosomal subunit. Contacts protein S5. The interaction surface between S4 and S5 is involved in control of translational fidelity.

Its function is as follows. One of the primary rRNA binding proteins, it binds directly to 16S rRNA where it nucleates assembly of the body of the 30S subunit. Functionally, with S5 and S12 plays an important role in translational accuracy. This is Small ribosomal subunit protein uS4 from Helicobacter pylori (strain ATCC 700392 / 26695) (Campylobacter pylori).